The sequence spans 112 residues: Protein lin-52 homolog (112 aa).

Belongs to the lin-52 family. As to quaternary structure, component of the DREAM complex.

This is Protein lin-52 homolog (lin52) from Danio rerio (Zebrafish).